A 209-amino-acid polypeptide reads, in one-letter code: Peroxiredoxin (209 aa).

The region spanning 2-156 (PLIGDKFPEM…IVRMIRAFRV (155 aa)) is the Thioredoxin domain. Cysteine 44 (cysteine sulfenic acid (-SOH) intermediate) is an active-site residue. Residue arginine 119 coordinates substrate. Cysteine 198 and cysteine 204 are joined by a disulfide.

It belongs to the peroxiredoxin family. Prx6 subfamily. In terms of assembly, homodecamer. Pentamer of dimers that assemble into a ring structure.

The protein resides in the cytoplasm. The enzyme catalyses a hydroperoxide + [thioredoxin]-dithiol = an alcohol + [thioredoxin]-disulfide + H2O. In terms of biological role, thiol-specific peroxidase that catalyzes the reduction of hydrogen peroxide and organic hydroperoxides to water and alcohols, respectively. Plays a role in cell protection against oxidative stress by detoxifying peroxides. The polypeptide is Peroxiredoxin (Methanothermobacter thermautotrophicus (strain ATCC 29096 / DSM 1053 / JCM 10044 / NBRC 100330 / Delta H) (Methanobacterium thermoautotrophicum)).